A 30-amino-acid polypeptide reads, in one-letter code: U1-poneritoxin-Ni3d (30 aa).

It belongs to the ponericin-G family. In terms of tissue distribution, expressed by the venom gland.

Its subcellular location is the secreted. Its function is as follows. Has activity against some Gram-positive bacteria and S.cerevisiae. Has a non-hemolytic activity. This chain is U1-poneritoxin-Ni3d, found in Neoponera inversa (Ant).